The chain runs to 159 residues: Cyclic pyranopterin monophosphate synthase (159 aa).

Substrate-binding positions include 75–77 and 113–114; these read LCH and ME. The active site involves Asp128.

This sequence belongs to the MoaC family. In terms of assembly, homohexamer; trimer of dimers.

The enzyme catalyses (8S)-3',8-cyclo-7,8-dihydroguanosine 5'-triphosphate = cyclic pyranopterin phosphate + diphosphate. The protein operates within cofactor biosynthesis; molybdopterin biosynthesis. Functionally, catalyzes the conversion of (8S)-3',8-cyclo-7,8-dihydroguanosine 5'-triphosphate to cyclic pyranopterin monophosphate (cPMP). The polypeptide is Cyclic pyranopterin monophosphate synthase (Vibrio vulnificus (strain YJ016)).